Reading from the N-terminus, the 198-residue chain is Ras-related protein RabH (198 aa).

Residue Gly14–Ser21 participates in GTP binding. Positions Thr36–Phe44 match the Effector region motif. GTP contacts are provided by residues Asp62–Met66 and Ser120–Asp123. Cysteine methyl ester is present on Cys195. A lipid anchor (S-geranylgeranyl cysteine) is attached at Cys195. The propeptide at Ser196 to Asn198 is removed in mature form.

It belongs to the small GTPase superfamily. Rab family.

The protein resides in the cell membrane. The chain is Ras-related protein RabH (rabH) from Dictyostelium discoideum (Social amoeba).